We begin with the raw amino-acid sequence, 585 residues long: Potassium-transporting ATPase potassium-binding subunit (585 aa).

12 helical membrane-spanning segments follow: residues 23-43, 85-105, 152-172, 194-214, 275-295, 307-327, 345-365, 367-387, 397-417, 444-464, 502-522, and 547-567; these read GVII…ILSF, FINL…VIMF, FVIT…SMAF, IFDL…LAGI, VEFV…GIVF, VVMF…FAGV, AIGI…STGA, NAAL…GLLL, GVLN…LMVG, LLVV…SSFV, LDGV…LIIA, and VLLI…IIVL.

It belongs to the KdpA family. As to quaternary structure, the system is composed of three essential subunits: KdpA, KdpB and KdpC.

The protein localises to the cell membrane. Part of the high-affinity ATP-driven potassium transport (or Kdp) system, which catalyzes the hydrolysis of ATP coupled with the electrogenic transport of potassium into the cytoplasm. This subunit binds the extracellular potassium ions and delivers the ions to the membrane domain of KdpB through an intramembrane tunnel. In Thermoplasma acidophilum (strain ATCC 25905 / DSM 1728 / JCM 9062 / NBRC 15155 / AMRC-C165), this protein is Potassium-transporting ATPase potassium-binding subunit.